Reading from the N-terminus, the 157-residue chain is Small ribosomal subunit protein uS7 (157 aa).

It belongs to the universal ribosomal protein uS7 family. Part of the 30S ribosomal subunit. Contacts proteins S9 and S11.

Its function is as follows. One of the primary rRNA binding proteins, it binds directly to 16S rRNA where it nucleates assembly of the head domain of the 30S subunit. Is located at the subunit interface close to the decoding center, probably blocks exit of the E-site tRNA. The protein is Small ribosomal subunit protein uS7 of Leptospira biflexa serovar Patoc (strain Patoc 1 / Ames).